Here is a 366-residue protein sequence, read N- to C-terminus: Isopentenyl-diphosphate delta-isomerase (366 aa).

6–7 (RK) contributes to the substrate binding site. FMN-binding positions include T63, 64-66 (GMT), S94, and N123. 94–96 (SQR) contacts substrate. Q158 serves as a coordination point for substrate. Residue E159 coordinates Mg(2+). Residues K191, S216, T221, 273–275 (GIR), and 294–295 (AN) contribute to the FMN site.

It belongs to the IPP isomerase type 2 family. As to quaternary structure, homooctamer. Dimer of tetramers. Requires FMN as cofactor. NADPH serves as cofactor. It depends on Mg(2+) as a cofactor.

The protein localises to the cytoplasm. The catalysed reaction is isopentenyl diphosphate = dimethylallyl diphosphate. Involved in the biosynthesis of isoprenoids. Catalyzes the 1,3-allylic rearrangement of the homoallylic substrate isopentenyl (IPP) to its allylic isomer, dimethylallyl diphosphate (DMAPP). This chain is Isopentenyl-diphosphate delta-isomerase, found in Metallosphaera sedula (strain ATCC 51363 / DSM 5348 / JCM 9185 / NBRC 15509 / TH2).